We begin with the raw amino-acid sequence, 77 residues long: Putative defensin-like protein 129 (77 aa).

An N-terminal signal peptide occupies residues 1-25 (MTKNTALTIFMVVLVIEMVMEETQG). 4 disulfides stabilise this stretch: Cys-28–Cys-77, Cys-37–Cys-59, Cys-42–Cys-71, and Cys-46–Cys-73.

This sequence belongs to the DEFL family.

It is found in the secreted. This is Putative defensin-like protein 129 (LCR13) from Arabidopsis thaliana (Mouse-ear cress).